Reading from the N-terminus, the 125-residue chain is Holo-[acyl-carrier-protein] synthase (125 aa).

Mg(2+)-binding residues include aspartate 8 and glutamate 57.

Belongs to the P-Pant transferase superfamily. AcpS family. The cofactor is Mg(2+).

The protein localises to the cytoplasm. It carries out the reaction apo-[ACP] + CoA = holo-[ACP] + adenosine 3',5'-bisphosphate + H(+). Transfers the 4'-phosphopantetheine moiety from coenzyme A to a Ser of acyl-carrier-protein. This chain is Holo-[acyl-carrier-protein] synthase, found in Thermus thermophilus (strain ATCC BAA-163 / DSM 7039 / HB27).